The following is a 359-amino-acid chain: METQLSNGPTCNNTANGPTTINNNCSSPVDSGNTEDSKTNLIVNYLPQNMTQEELKSLFGSIGEIESCKLVRDKITGQSLGYGFVNYIDPKDAEKAINTLNGLRLQTKTIKVSYARPSSASIRDANLYVSGLPKTMTQKELEQLFSQYGRIITSRILVDQVTGISRGVGFIRFDKRIEAEEAIKGLNGQKPPGATEPITVKFANNPSQKTNQAILSQLYQSPNRRYPGPLAQQAQRFRLDNLLNMAYGVKRFSPMTIDGMTSLAGINIPGHPGTGWCIFVYNLAPDADESILWQMFGPFGAVTNVKVIRDFNTNKCKGFGFVTMTNYDEAAMAIASLNGYRLGDRVLQVSFKTNKTHKA.

The interval 1–33 (METQLSNGPTCNNTANGPTTINNNCSSPVDSGN) is disordered. RRM domains follow at residues 39–117 (TNLI…YARP) and 125–205 (ANLY…FANN). Ser221 bears the Phosphoserine mark. Residues 276–354 (WCIFVYNLAP…RVLQVSFKTN (79 aa)) form the RRM 3 domain.

Belongs to the RRM elav family. Interacts with IGF2BP1. Interacts with MAP1B light chain LC1.

Its function is as follows. RNA-binding protein that binds to the 3' untranslated region (3'UTR) of target mRNAs. Seems to recognize a GAAA motif. Can bind to its own 3'UTR, the FOS 3'UTR and the ID 3'UTR. The polypeptide is ELAV-like protein 2 (ELAVL2) (Pongo abelii (Sumatran orangutan)).